The following is a 312-amino-acid chain: 4-diphosphocytidyl-2-C-methyl-D-erythritol kinase (312 aa).

The active site involves K16. Residue 101 to 111 (PIGAGLAGGSS) coordinates ATP. The active site involves D143.

The protein belongs to the GHMP kinase family. IspE subfamily.

The enzyme catalyses 4-CDP-2-C-methyl-D-erythritol + ATP = 4-CDP-2-C-methyl-D-erythritol 2-phosphate + ADP + H(+). It participates in isoprenoid biosynthesis; isopentenyl diphosphate biosynthesis via DXP pathway; isopentenyl diphosphate from 1-deoxy-D-xylulose 5-phosphate: step 3/6. In terms of biological role, catalyzes the phosphorylation of the position 2 hydroxy group of 4-diphosphocytidyl-2C-methyl-D-erythritol. The polypeptide is 4-diphosphocytidyl-2-C-methyl-D-erythritol kinase (Prochlorococcus marinus (strain MIT 9515)).